A 319-amino-acid polypeptide reads, in one-letter code: 2,3,4,5-tetrahydropyridine-2,6-dicarboxylate N-succinyltransferase (319 aa).

Mg(2+) is bound by residues Asp-167 and Glu-184. The Acyl-anhydride intermediate role is filled by Glu-200. Residues Arg-202, Gly-217, Ser-220, Ala-243, 258–259, and Lys-278 contribute to the succinyl-CoA site; that span reads EA.

Belongs to the type 2 tetrahydrodipicolinate N-succinyltransferase family. As to quaternary structure, homotrimer.

It is found in the cytoplasm. The catalysed reaction is (S)-2,3,4,5-tetrahydrodipicolinate + succinyl-CoA + H2O = (S)-2-succinylamino-6-oxoheptanedioate + CoA. It participates in amino-acid biosynthesis; L-lysine biosynthesis via DAP pathway; LL-2,6-diaminopimelate from (S)-tetrahydrodipicolinate (succinylase route): step 1/3. In terms of biological role, catalyzes the conversion of the cyclic tetrahydrodipicolinate (THDP) into the acyclic N-succinyl-L-2-amino-6-oxopimelate using succinyl-CoA. The protein is 2,3,4,5-tetrahydropyridine-2,6-dicarboxylate N-succinyltransferase of Salinispora tropica (strain ATCC BAA-916 / DSM 44818 / JCM 13857 / NBRC 105044 / CNB-440).